Consider the following 898-residue polypeptide: MRTVACAVLLACFMGCLAGAWAQSAGLEILPNSENQTKPIGRSMLLTCKPNVTNKNLISQLRWTDPSGREVPFKNPTLLKPHIFVDWLPPPGEKVLTLMIPELREADTGTYTCSALYSNTKQLSKSVHVRTIMPITWDDAPEEQYPTVNETFKIRCRVSANPPAIVNWMRDGHIVETGDRYVVEQDGLTILNVTEMDDGTYTCRAIVIATGEMALRPIRVEVHTPPQMSGALPPKLEAVEGTDFTAKCAASGKPVPRYTWIRVDTARDLTKDGDRVSADVLLGELRIREVRPEDAANYSCTAKNAAGTATATVEVTVVVRPRIGRFDNISVASGKDSEAVLECHATGSPLPAVTFRKLSNPNRYINGIQPTEDRITVDGVDSPDGRTRIGKLIISNVLRSDDGLYECIATNKGGEVKKNGHLMVEFKPSFADTPQKEVWGWEQHAVNLTCLAHSIPNATISWHFNGADLFRGREGQELQQTGYTLFGSGPRSTLQVIPFNRKMYGNYKCTATNKHGTAVHEIMLREARVPSAVLQVKMDVMTATTVTFKFFGPGNDGGLPTKNYAVQYKQDSQGWEDALNRTWPVDSPYILENLKPQTRYNFRFAAQNEVGFGPWSSQQTHTTPRISAPEEPRLLGLPLSATSGTENEVVVSPYPNRYELRWQVPADNGEPITHYSVKSCPVEKYDTEWRLLPYPCQEHKLEGQATTFQLESLQPDTHYKVEVRATNAIGNSVPGQIIVRTVKDPSQMPGVANVEDGSEGQMSSAAIVVLVVAALLLALLVVDLVCCLVWRGGLIAALCHRCCSAAKTDDSDAKIASLYSWRFPLPYCSNKEDPAMLAPAKMQQATVKIPVIEEKEPLRDGKEPVPIIKERVKRETAVDFDVKKSVSRTSFVGKDSAV.

The first 22 residues, 1 to 22, serve as a signal peptide directing secretion; the sequence is MRTVACAVLLACFMGCLAGAWA. The Extracellular segment spans residues 23–764; it reads QSAGLEILPN…EDGSEGQMSS (742 aa). Ig-like C2-type domains follow at residues 31 to 124, 134 to 219, 226 to 316, 321 to 423, and 428 to 525; these read PNSE…KQLS, PITW…RPIR, PQMS…VEVT, PRIG…GHLM, and PSFA…IMLR. Residues Asn-35, Asn-51, Asn-149, Asn-192, Asn-297, and Asn-328 are each glycosylated (N-linked (GlcNAc...) asparagine). The cysteines at positions 48 and 113 are disulfide-linked. Cystine bridges form between Cys-156/Cys-203 and Cys-248/Cys-300. The cysteines at positions 343 and 407 are disulfide-linked. Asn-447, Asn-457, and Asn-580 each carry an N-linked (GlcNAc...) asparagine glycan. Cys-450 and Cys-509 are disulfide-bonded. Fibronectin type-III domains follow at residues 532–626 and 644–745; these read AVLQ…TPRI and GTEN…VKDP. Residues 765–782 traverse the membrane as a helical segment; the sequence is AAIVVLVVAALLLALLVV. The Cytoplasmic portion of the chain corresponds to 783–898; it reads DLVCCLVWRG…TSFVGKDSAV (116 aa).

The protein localises to the membrane. Functionally, neuronal recognition molecule. Involved in a pathway recognition for axons during the development of nerve fascicles. This is Fasciclin-2 (FAS2) from Schistocerca americana (American grasshopper).